Consider the following 336-residue polypeptide: E3 ubiquitin-protein ligase RING2 (336 aa).

At S2 the chain carries N-acetylserine. An interaction with HIP2 region spans residues 2-179 (SQAVQTNGTQ…AEDNGDSSHC (178 aa)). The residue at position 41 (S41) is a Phosphoserine. The RING-type zinc finger occupies 51–91 (CPICLDMLKNTMTTKECLHRFCADCIITALRSGNKECPTCR). Residues 93 to 98 (KLVSKR) form an interaction with nucleosomes via an acidic patch on histone H2A and histone H2B region. K112 is covalently cross-linked (Glycyl lysine isopeptide (Lys-Gly) (interchain with G-Cter in ubiquitin)). Phosphoserine is present on residues S143 and S168. The tract at residues 157–213 (QRGKKQQIENGSGAEDNGDSSHCSNASTHSNQEAGPSNKRTKTSDDSGLEPDNNNAA) is disordered. The span at 176-191 (SSHCSNASTHSNQEAG) shows a compositional bias: polar residues. Glycyl lysine isopeptide (Lys-Gly) (interchain with G-Cter in SUMO2) cross-links involve residues K249 and K323.

Component of chromatin-associated Polycomb (PcG) complexes. Component of a number of PRC1-like complexes; these complexes contain either the polycomb group ring finger protein PCGF1, or PCGF2, or PCGF3, or BMI1, or PCGF5, or PCGF6. Distinct PRC1-like complexes are composed of a RING1 subunit (RING1B or RING1A), one of the six PCGF proteins (PCGF1, PCGF2, PCGF3, BMI1, PCGF5 or PCGF6), one PHC protein (PHC1, PHC2 or PHC3) and one of the CBX proteins (CBX2, CBX4, CBX6, CBX7 or CBX8). Part of a complex that contains RNF2, UB2D3 and BMI1; within that complex RNF2 and BMI1 form a tight heterodimer, where UB2D3 interacts only with RNF2. The complex composed of RNF2, UB2D3 and BMI1 binds nucleosomes, and has activity only with nucleosomal histone H2A. Part of a complex that contains PCGF5, RNF2 and UBE2D3. Part of a complex that contains AUTS2, PCGF5, RNF2, CSNK2B and RYBP. Interacts with CBX6 and CBX8. Interacts with PHC1, PCGF2, RYBP, CBX7, CBX4, CBX2, RNF1/RING1, BMI1 and PHC2. Interaction with RYBP and CBX7 is mutually exclusive; both compete for the same binding site on RNF2. Component of repressive BCOR complex containing a Polycomb group subcomplex at least composed of RYBP, PCGF1, BCOR and RING1. Interacts with CBX2 and PHC1. Interacts with CHTOP. Interacts with AURKB. Part of the E2F6.com-1 complex in G0 phase composed of E2F6, MGA, MAX, TFDP1, CBX3, BAT8, EUHMTASE1, RNF1/RING1, RNF2/RING2, MBLR, L3MBTL2 and YAF2. Component of some MLL1/MLL complex, at least composed of the core components KMT2A/MLL1, ASH2L, HCFC1/HCF1, WDR5 and RBBP5, as well as the facultative components BACC1, CHD8, E2F6, HSP70, INO80C, KANSL1, LAS1L, MAX, MCRS1, MGA, MYST1/MOF, PELP1, PHF20, PRP31, RING2, RUVB1/TIP49A, RUVB2/TIP49B, SENP3, TAF1, TAF4, TAF6, TAF7, TAF9 and TEX10. Interacts with RYBP, HIP2 and TFCP2. Interacts with NUPR1. Interacts with SAMD7 in a PHC2-dependent manner. Post-translationally, monoubiquitinated, by auto-ubiquitination. Polyubiquitinated in the presence of UBE2D3 (in vitro).

The protein localises to the nucleus. It localises to the cytoplasm. The protein resides in the chromosome. It catalyses the reaction S-ubiquitinyl-[E2 ubiquitin-conjugating enzyme]-L-cysteine + [acceptor protein]-L-lysine = [E2 ubiquitin-conjugating enzyme]-L-cysteine + N(6)-ubiquitinyl-[acceptor protein]-L-lysine.. Its pathway is protein modification; protein ubiquitination. E3 ubiquitin-protein ligase that mediates monoubiquitination of 'Lys-119' of histone H2A (H2AK119Ub), thereby playing a central role in histone code and gene regulation. H2AK119Ub gives a specific tag for epigenetic transcriptional repression and participates in X chromosome inactivation of female mammals. May be involved in the initiation of both imprinted and random X inactivation. Essential component of a Polycomb group (PcG) multiprotein PRC1-like complex, a complex class required to maintain the transcriptionally repressive state of many genes, including Hox genes, throughout development. PcG PRC1 complex acts via chromatin remodeling and modification of histones, rendering chromatin heritably changed in its expressibility. E3 ubiquitin-protein ligase activity is enhanced by BMI1/PCGF4. Acts as the main E3 ubiquitin ligase on histone H2A of the PRC1 complex, while RING1 may rather act as a modulator of RNF2/RING2 activity. Plays a role in the transcriptional repression of genes that are required for pluripotency in embryonic stem cells, thereby contributing to differentiation of the ectodermal and endodermal germ layers. Association with the chromosomal DNA is cell-cycle dependent. In resting B- and T-lymphocytes, interaction with AURKB leads to block its activity, thereby maintaining transcription in resting lymphocytes. Also acts as a negative regulator of autophagy by mediating ubiquitination of AMBRA1, leading to its subsequent degradation. The chain is E3 ubiquitin-protein ligase RING2 (RNF2) from Pongo abelii (Sumatran orangutan).